Here is a 1075-residue protein sequence, read N- to C-terminus: DNA-directed RNA polymerase subunit beta (1075 aa).

It belongs to the RNA polymerase beta chain family. As to quaternary structure, in plastids the minimal PEP RNA polymerase catalytic core is composed of four subunits: alpha, beta, beta', and beta''. When a (nuclear-encoded) sigma factor is associated with the core the holoenzyme is formed, which can initiate transcription.

The protein resides in the plastid. The protein localises to the chloroplast. The catalysed reaction is RNA(n) + a ribonucleoside 5'-triphosphate = RNA(n+1) + diphosphate. DNA-dependent RNA polymerase catalyzes the transcription of DNA into RNA using the four ribonucleoside triphosphates as substrates. This Pinus thunbergii (Japanese black pine) protein is DNA-directed RNA polymerase subunit beta.